A 113-amino-acid polypeptide reads, in one-letter code: U11-theraphotoxin-Hhn1a (113 aa).

Positions 1–21 are cleaved as a signal peptide; the sequence is MNTVRVTFLLVFVLAVSLGQA. A propeptide spanning residues 22–74 is cleaved from the precursor; that stretch reads DKDENRMEMQEKTEQGKSYLDFAENLLLQKLEELEAKPLEEDSEESRNSRQKR. The segment covering 57–69 has biased composition (basic and acidic residues); sequence AKPLEEDSEESRN. Positions 57–83 are disordered; the sequence is AKPLEEDSEESRNSRQKRCIGEGVPCD. Cystine bridges form between Cys-75–Cys-90, Cys-82–Cys-95, and Cys-89–Cys-110.

Belongs to the neurotoxin 14 (magi-1) family. 01 (HNTX-16) subfamily. Expressed by the venom gland.

The protein localises to the secreted. Its function is as follows. Probable ion channel inhibitor. In Cyriopagopus hainanus (Chinese bird spider), this protein is U11-theraphotoxin-Hhn1a.